The sequence spans 349 residues: UDP-N-acetylenolpyruvoylglucosamine reductase (349 aa).

The 172-residue stretch at 26–197 (FDARARVAAR…VAVTFRLPKA (172 aa)) folds into the FAD-binding PCMH-type domain. Arg173 is a catalytic residue. Ser249 serves as the catalytic Proton donor. Glu345 is an active-site residue.

The protein belongs to the MurB family. FAD is required as a cofactor.

It is found in the cytoplasm. It catalyses the reaction UDP-N-acetyl-alpha-D-muramate + NADP(+) = UDP-N-acetyl-3-O-(1-carboxyvinyl)-alpha-D-glucosamine + NADPH + H(+). Its pathway is cell wall biogenesis; peptidoglycan biosynthesis. Functionally, cell wall formation. This Burkholderia pseudomallei (strain 1710b) protein is UDP-N-acetylenolpyruvoylglucosamine reductase.